Reading from the N-terminus, the 246-residue chain is Carboxy-S-adenosyl-L-methionine synthase (246 aa).

Residues tyrosine 39, 64-66 (GCS), 89-90 (DN), 121-122 (DI), asparagine 136, and arginine 203 contribute to the S-adenosyl-L-methionine site.

The protein belongs to the class I-like SAM-binding methyltransferase superfamily. Cx-SAM synthase family. Homodimer.

The catalysed reaction is prephenate + S-adenosyl-L-methionine = carboxy-S-adenosyl-L-methionine + 3-phenylpyruvate + H2O. Catalyzes the conversion of S-adenosyl-L-methionine (SAM) to carboxy-S-adenosyl-L-methionine (Cx-SAM). This chain is Carboxy-S-adenosyl-L-methionine synthase, found in Pseudomonas aeruginosa (strain UCBPP-PA14).